A 469-amino-acid chain; its full sequence is 3-isopropylmalate dehydratase large subunit (469 aa).

3 residues coordinate [4Fe-4S] cluster: C349, C410, and C413.

It belongs to the aconitase/IPM isomerase family. LeuC type 1 subfamily. As to quaternary structure, heterodimer of LeuC and LeuD. [4Fe-4S] cluster serves as cofactor.

The enzyme catalyses (2R,3S)-3-isopropylmalate = (2S)-2-isopropylmalate. The protein operates within amino-acid biosynthesis; L-leucine biosynthesis; L-leucine from 3-methyl-2-oxobutanoate: step 2/4. In terms of biological role, catalyzes the isomerization between 2-isopropylmalate and 3-isopropylmalate, via the formation of 2-isopropylmaleate. The polypeptide is 3-isopropylmalate dehydratase large subunit (Azoarcus sp. (strain BH72)).